The primary structure comprises 1506 residues: MSDRPGSASEGEGDEIRPYGEDRDSSEESEDDDPEEAKRIAEGFIVDEDEEDGEGEDDEEDEETRRRRRKEEKRRRKKERRMRREREEAELSEDELELIEENRGLREGRPLKRLRRRSGSEGSENDRAVPTLQDMFRDDEDRMEDDDDDLMDFIEEDEEDEANQGETEEQRRERKRAEKLKRREQARSRPELTGVDRSSWDEIFAVFGDGQDYDWALEGEDGMDLDEEEEAAKKDLRLEDVFDPAEIKARRLQDEDKAVANADRPERHQIVNSTLSDNPVFATDTLYPPPDFAAKWVAPKVSFRTQYLFYNQHPEGSYPIPTIDNPQPYPVYRRPDLEIEFEKAVSTALNMMFVQHLEVPYLWHYKRDVFSLLENQGQSSVLFLERDELWQVYVLGQRYRAIHERNEQTRQQWGKIKARKGDIEDEYFTKGLLGKACVASIEAAGEGDEWLAYHYASDIKAIKEEEAFDEVSKKLPERAEREDIRRGRIMKLVEAFGIDANKVASSFQDVHGQPAPVMNPDKMPLELADEFTGAAYSSPEQALSAASFVLVQELSKDPAIRQQARDFMDTCGLVTVNATDRGMSVIDQYHLYYNFKFLTNKPVPDFRDSPQFVHMLKAEEEGLINIAFDIREDMLASFTDALIRCCRSNDYGEIASAWNEVRMEVCNTLVKKHLMPMASKWIKEHLRTQAEEYIAERCREELELRVNVRPYASSGMEQGETPSVLAITNGKGDIRDAVMAVMLDDEGNVRTQTKFDNLRDEEDKTMFIELLEKRKPKVVVIGGFSAQTARLKDAALVAIRQHAIELLGQNPPVSDAYPDHEGFQYAMAEYDEKLKAHLIPLIFVNDATARLYMSSEEAEKEHPNLPLNGRYALGLARYAQNPLNAYCKLGKHIASVTFMEHHQKLIPQEKLLYHLERGLVNSVCFMGIEINSCVADPYQRAMLPYIAGLGPRKADAVIYGIQKHGALINRMAFTDLGLFGPTIFENTAGFLTIESDLKDMMLEAENPQEQPDPLDMTRIHPENYEFAQKMCQDALDLDVEDVADRHKSEVVQTLMLDDKRGKKLGELNLDDFAFNLQRQGEGNKRHTLGEIVSELIRYRSDRRPAFYVPTDWEIVTMVTGETERTVGRGLKVTATVRKAISARVFCQLESGLDAVLERDYVADEDQAPVTSCDEVFKPRQAIKGVVIMPEPARFQVRISTRPSDLRQGVDFVQPFKDEEYNSKDRRDAAEAATAAKKQRRAGKVQRIVNHPNWHVLNSGQAEQFLASQHRGDCVIRPSSKGPDRIAVTWKVDEDVYQHIDVQEIDKPNEYSLGRILMVSGQYRYSDLDDLIINHVKATARKFDEIQMHEKYKPEHELDAFLKNYVQAHPGRSIYGFSVDSDRPGYLKLCFLSKPTKDGGVIQTWPVRVLPGAYKLGNAIVPGVTELSNAFKMQYSEKLAEQGHQGKTPGIYLGKTPMHLGGRTPALGSRTPAMGSRTPALGSRTPALGSRTPALGSRTPAQGGPRY.

Positions 1–194 (MSDRPGSASE…QARSRPELTG (194 aa)) are disordered. Residues 14 to 23 (DEIRPYGEDR) show a composition bias toward basic and acidic residues. Acidic residues-rich tracts occupy residues 24–35 (DSSEESEDDDPE) and 45–62 (IVDE…EEDE). Residues 66–81 (RRRRKEEKRRRKKERR) show a composition bias toward basic residues. The span at 90-99 (ELSEDELELI) shows a compositional bias: acidic residues. The span at 100-110 (EENRGLREGRP) shows a compositional bias: basic and acidic residues. Residues 141-167 (DRMEDDDDDLMDFIEEDEEDEANQGET) are compositionally biased toward acidic residues. Basic and acidic residues predominate over residues 168 to 190 (EEQRRERKRAEKLKRREQARSRP). An S1 motif domain is found at 1129–1201 (GLKVTATVRK…ARFQVRISTR (73 aa)). Residues 1239–1349 (RRAGKVQRIV…RKFDEIQMHE (111 aa)) form the SH2 domain. Residues 1460 to 1506 (GGRTPALGSRTPAMGSRTPALGSRTPALGSRTPALGSRTPAQGGPRY) form a disordered region.

It belongs to the SPT6 family.

It is found in the nucleus. The protein resides in the chromosome. Its function is as follows. Histone H3-H4 chaperone that plays a role in maintenance of chromatin structure during RNA polymerase II transcription elongation thereby repressing transcription initiation from cryptic promoters. Mediates the reassembly of nucleosomes onto the promoters of at least a selected set of genes during repression; the nucleosome reassembly is essential for transcriptional repression. Essential for viability. The chain is Transcription elongation factor SPT6 (SPT6) from Cryptococcus neoformans var. neoformans serotype D (strain B-3501A) (Filobasidiella neoformans).